A 206-amino-acid polypeptide reads, in one-letter code: uncharacterized protein (206 aa).

The N-terminal stretch at methionine 1–alanine 17 is a signal peptide. A lipid anchor (N-palmitoyl cysteine) is attached at cysteine 18. The S-diacylglycerol cysteine moiety is linked to residue cysteine 18. Residues alanine 21 to lysine 58 adopt a coiled-coil conformation. The region spanning glycine 97 to glutamate 201 is the Cytochrome c domain. Cysteine 127, cysteine 130, and histidine 131 together coordinate heme c.

Its subcellular location is the cell membrane. This is an uncharacterized protein from Aquifex aeolicus (strain VF5).